The chain runs to 257 residues: Zinc transporter ZupT (257 aa).

8 helical membrane passes run 5–25, 32–52, 61–81, 109–129, 137–157, 171–191, 195–215, and 236–256; these read LILT…GVIG, VLAF…LMEM, GMSP…YFAL, AILL…ATYV, LGFG…LAVA, ILWA…TWLI, MISP…MVAL, and GVLC…TAGF. 2 residues coordinate Fe(2+): Asn120 and Glu123. Zn(2+) contacts are provided by Glu123 and His148. Positions 149, 152, and 181 each coordinate Fe(2+). Glu152 is a binding site for Zn(2+).

This sequence belongs to the ZIP transporter (TC 2.A.5) family. ZupT subfamily.

Its subcellular location is the cell inner membrane. It carries out the reaction Zn(2+)(in) = Zn(2+)(out). Mediates zinc uptake. May also transport other divalent cations. This chain is Zinc transporter ZupT, found in Enterobacter sp. (strain 638).